A 328-amino-acid polypeptide reads, in one-letter code: GTP 3',8-cyclase (328 aa).

A Radical SAM core domain is found at 1 to 229 (MNQVDYLRIS…ESQVRGAGPA (229 aa)). Arginine 8 is a binding site for GTP. [4Fe-4S] cluster-binding residues include cysteine 15 and cysteine 19. Position 21 (tyrosine 21) interacts with S-adenosyl-L-methionine. Cysteine 22 is a [4Fe-4S] cluster binding site. Residue arginine 60 coordinates GTP. Glycine 64 contributes to the S-adenosyl-L-methionine binding site. GTP is bound at residue threonine 91. Serine 115 lines the S-adenosyl-L-methionine pocket. Lysine 155 is a binding site for GTP. Methionine 189 provides a ligand contact to S-adenosyl-L-methionine. 2 residues coordinate [4Fe-4S] cluster: cysteine 252 and cysteine 255. Position 257 to 259 (257 to 259 (RMR)) interacts with GTP. A [4Fe-4S] cluster-binding site is contributed by cysteine 269.

This sequence belongs to the radical SAM superfamily. MoaA family. Monomer and homodimer. [4Fe-4S] cluster is required as a cofactor.

The enzyme catalyses GTP + AH2 + S-adenosyl-L-methionine = (8S)-3',8-cyclo-7,8-dihydroguanosine 5'-triphosphate + 5'-deoxyadenosine + L-methionine + A + H(+). Its pathway is cofactor biosynthesis; molybdopterin biosynthesis. In terms of biological role, catalyzes the cyclization of GTP to (8S)-3',8-cyclo-7,8-dihydroguanosine 5'-triphosphate. This chain is GTP 3',8-cyclase, found in Nostoc punctiforme (strain ATCC 29133 / PCC 73102).